The following is a 181-amino-acid chain: Small ribosomal subunit protein bS16 (181 aa).

The segment at 150 to 181 (KKAAEEAAKAAAEAPAEEAAPAEETATEAAAE) is disordered. A compositionally biased stretch (low complexity) spans 158–181 (KAAAEAPAEEAAPAEETATEAAAE).

This sequence belongs to the bacterial ribosomal protein bS16 family.

The protein is Small ribosomal subunit protein bS16 of Bacteroides fragilis (strain YCH46).